The primary structure comprises 159 residues: Probable inactive acireductone dioxygenase 2 (159 aa).

Belongs to the acireductone dioxygenase (ARD) family.

Its subcellular location is the cytoplasm. The protein resides in the nucleus. Its function is as follows. Probable inactive acireductone dioxygenase. In Caenorhabditis briggsae, this protein is Probable inactive acireductone dioxygenase 2.